A 588-amino-acid chain; its full sequence is L-fucose isomerase (588 aa).

Active-site proton acceptor residues include Glu335 and Asp359. Mn(2+) is bound by residues Glu335, Asp359, and His525.

Belongs to the L-fucose isomerase family. The cofactor is Mn(2+).

Its subcellular location is the cytoplasm. The catalysed reaction is L-fucose = L-fuculose. Its pathway is carbohydrate degradation; L-fucose degradation; L-lactaldehyde and glycerone phosphate from L-fucose: step 1/3. Functionally, converts the aldose L-fucose into the corresponding ketose L-fuculose. This Streptococcus pneumoniae (strain 70585) protein is L-fucose isomerase.